The chain runs to 476 residues: ATP synthase subunit beta 2 (476 aa).

160-167 (GGAGVGKT) is a binding site for ATP.

This sequence belongs to the ATPase alpha/beta chains family. As to quaternary structure, F-type ATPases have 2 components, CF(1) - the catalytic core - and CF(0) - the membrane proton channel. CF(1) has five subunits: alpha(3), beta(3), gamma(1), delta(1), epsilon(1). CF(0) has four main subunits: a(1), b(1), b'(1) and c(9-12).

The protein resides in the cell inner membrane. The enzyme catalyses ATP + H2O + 4 H(+)(in) = ADP + phosphate + 5 H(+)(out). Produces ATP from ADP in the presence of a proton gradient across the membrane. The catalytic sites are hosted primarily by the beta subunits. The chain is ATP synthase subunit beta 2 from Bradyrhizobium sp. (strain BTAi1 / ATCC BAA-1182).